The primary structure comprises 605 residues: Formin-binding protein 1-like (605 aa).

The F-BAR domain maps to 1 to 263 (MSWGTELWDQ…AAKSVDERRD (263 aa)). Positions 66-258 (FTSCVAFFNI…EGMILAAKSV (193 aa)) form a coiled coil. The interval 245–535 (SKCLEGMILA…EFDDEFEDDD (291 aa)) is interaction with CDC42. Position 295 is a phosphoserine (Ser-295). Positions 392–484 (LEDFSHLPPE…VEGKTGGRGD (93 aa)) form a coiled coil. The 78-residue stretch at 397-474 (HLPPEQRRKK…IHKNEAWLSE (78 aa)) folds into the REM-1 domain. Positions 476–490 (EGKTGGRGDRRHSSD) are enriched in basic and acidic residues. The segment at 476 to 539 (EGKTGGRGDR…EFEDDDPLPA (64 aa)) is disordered. A phosphoserine mark is found at Ser-488, Ser-501, and Ser-505. Positions 522–605 (GHHNEFDDEF…VTLEKNSKGS (84 aa)) are interaction with DNM1. The segment covering 527-536 (FDDEFEDDDP) has biased composition (acidic residues). The SH3 domain maps to 538–599 (PAIGHCKAIY…PTSYIDVTLE (62 aa)). The interval 541-597 (GHCKAIYPFDGHNEGTLAMKEGEVLYIIEEDKGDGWTRARRQNGEEGYVPTSYIDVT) is interaction with DNM2 and WASL. The tract at residues 541 to 605 (GHCKAIYPFD…VTLEKNSKGS (65 aa)) is interaction with DAAM1, DIAPH1 and DIAPH2.

This sequence belongs to the FNBP1 family. In terms of assembly, homodimerizes, the dimers can polymerize end-to-end to form filamentous structures. Interacts with GTP-bound CDC42. Interacts with DAAM1, DIAPH1, DIAPH2, DNM1, DNM2 and WASL/N-WASP. Interacts with ATG3. Interacts (via SH3 domain) with ABI1, WASF2, CDC42 and WIPF1.

It is found in the cytoplasm. It localises to the cytoskeleton. The protein localises to the cell cortex. Its subcellular location is the cytoplasmic vesicle. The protein resides in the cell membrane. Its function is as follows. Required to coordinate membrane tubulation with reorganization of the actin cytoskeleton during endocytosis. May bind to lipids such as phosphatidylinositol 4,5-bisphosphate and phosphatidylserine and promote membrane invagination and the formation of tubules. Also promotes CDC42-induced actin polymerization by activating the WASL/N-WASP-WASPIP/WIP complex, the predominant form of WASL/N-WASP in cells. Actin polymerization may promote the fission of membrane tubules to form endocytic vesicles. Essential for autophagy of intracellular bacterial pathogens. The sequence is that of Formin-binding protein 1-like (FNBP1L) from Homo sapiens (Human).